Here is a 239-residue protein sequence, read N- to C-terminus: Small ribosomal subunit protein uS3 (239 aa).

The KH type-2 domain occupies I38 to K106.

This sequence belongs to the universal ribosomal protein uS3 family. Part of the 30S ribosomal subunit. Forms a tight complex with proteins S10 and S14.

Binds the lower part of the 30S subunit head. Binds mRNA in the 70S ribosome, positioning it for translation. The polypeptide is Small ribosomal subunit protein uS3 (Elusimicrobium minutum (strain Pei191)).